The chain runs to 299 residues: Putative fructokinase (299 aa).

Thr-130 serves as a coordination point for ATP. 4 residues coordinate Zn(2+): His-153, Cys-168, His-171, and Cys-174. ATP is bound by residues Pro-182 and Gly-230–Gln-234.

Belongs to the ROK (NagC/XylR) family. Requires Mg(2+) as cofactor.

It catalyses the reaction D-fructose + ATP = D-fructose 6-phosphate + ADP + H(+). Its activity is regulated as follows. Inhibited by zinc ions. Its function is as follows. Seems to be involved in the degradation of glucomannan. The protein is Putative fructokinase (gmuE) of Bacillus subtilis (strain 168).